The following is a 271-amino-acid chain: Small ribosomal subunit protein uS2 (271 aa).

Positions K229 to K242 are enriched in basic and acidic residues. The interval K229–E271 is disordered. Residues A243 to E271 are compositionally biased toward low complexity.

The protein belongs to the universal ribosomal protein uS2 family.

This chain is Small ribosomal subunit protein uS2, found in Nitratidesulfovibrio vulgaris (strain DSM 19637 / Miyazaki F) (Desulfovibrio vulgaris).